Reading from the N-terminus, the 223-residue chain is Glutathione S-transferase A2 (223 aa).

Alanine 2 carries the post-translational modification N-acetylalanine. Residues 3–83 (GKPKLHYFNG…YIATKYNLYG (81 aa)) form the GST N-terminal domain. Position 4 is an N6-succinyllysine (lysine 4). Glutathione-binding positions include tyrosine 9, arginine 45, 54–55 (QV), and 67–68 (QT). The GST C-terminal domain occupies 85–208 (DMKERALIDM…QPGSQRKPPM (124 aa)).

Belongs to the GST superfamily. Alpha family. In terms of assembly, homodimer. In terms of tissue distribution, expressed in corpus luteum, adrenal gland, testis, liver, lung, thyroid and kidney.

It localises to the cytoplasm. The catalysed reaction is RX + glutathione = an S-substituted glutathione + a halide anion + H(+). Functionally, conjugation of reduced glutathione to a wide number of exogenous and endogenous hydrophobic electrophiles. The polypeptide is Glutathione S-transferase A2 (GSTA2) (Bos taurus (Bovine)).